The chain runs to 59 residues: Large ribosomal subunit protein uL30 (59 aa).

The protein belongs to the universal ribosomal protein uL30 family. As to quaternary structure, part of the 50S ribosomal subunit.

In Haemophilus ducreyi (strain 35000HP / ATCC 700724), this protein is Large ribosomal subunit protein uL30.